Reading from the N-terminus, the 330-residue chain is Peroxidase 70 (330 aa).

The first 24 residues, 1 to 24, serve as a signal peptide directing secretion; the sequence is MRSFTNLNPCYVLLPFFLVLATNA. 4 disulfide bridges follow: C43–C119, C76–C81, C125–C326, and C202–C234. H74 serves as the catalytic Proton acceptor. Residues D75, V78, G80, D82, and S84 each contribute to the Ca(2+) site. Residue P165 coordinates substrate. H195 serves as a coordination point for heme b. T196 is a binding site for Ca(2+). Ca(2+)-binding residues include D247, S250, and D255.

Belongs to the peroxidase family. Classical plant (class III) peroxidase subfamily. The cofactor is heme b. Requires Ca(2+) as cofactor.

The protein localises to the secreted. The enzyme catalyses 2 a phenolic donor + H2O2 = 2 a phenolic radical donor + 2 H2O. In terms of biological role, removal of H(2)O(2), oxidation of toxic reductants, biosynthesis and degradation of lignin, suberization, auxin catabolism, response to environmental stresses such as wounding, pathogen attack and oxidative stress. These functions might be dependent on each isozyme/isoform in each plant tissue. This Arabidopsis thaliana (Mouse-ear cress) protein is Peroxidase 70 (PER70).